The primary structure comprises 65 residues: Muscarinic toxin-like protein 1 (65 aa).

4 disulfides stabilise this stretch: Cys-3–Cys-24, Cys-17–Cys-42, Cys-46–Cys-57, and Cys-58–Cys-63.

The protein belongs to the three-finger toxin family. Short-chain subfamily. Type C muscarinic toxin sub-subfamily. Monomer. Expressed by the venom gland.

It localises to the secreted. Its function is as follows. Binds weakly to the muscarinic acetylcholine receptor (CHRM). This chain is Muscarinic toxin-like protein 1, found in Naja kaouthia (Monocled cobra).